Consider the following 375-residue polypeptide: Queuine tRNA-ribosyltransferase (375 aa).

Catalysis depends on Asp89, which acts as the Proton acceptor. Substrate-binding positions include 89–93 (DSGGF), Asp143, Gln187, and Gly214. The interval 245–251 (GVGKPED) is RNA binding. The active-site Nucleophile is the Asp264. The interval 269-273 (TRNAR) is RNA binding; important for wobble base 34 recognition. Zn(2+) is bound by residues Cys302, Cys304, Cys307, and His333.

The protein belongs to the queuine tRNA-ribosyltransferase family. As to quaternary structure, homodimer. Within each dimer, one monomer is responsible for RNA recognition and catalysis, while the other monomer binds to the replacement base PreQ1. The cofactor is Zn(2+).

It carries out the reaction 7-aminomethyl-7-carbaguanine + guanosine(34) in tRNA = 7-aminomethyl-7-carbaguanosine(34) in tRNA + guanine. The protein operates within tRNA modification; tRNA-queuosine biosynthesis. Functionally, catalyzes the base-exchange of a guanine (G) residue with the queuine precursor 7-aminomethyl-7-deazaguanine (PreQ1) at position 34 (anticodon wobble position) in tRNAs with GU(N) anticodons (tRNA-Asp, -Asn, -His and -Tyr). Catalysis occurs through a double-displacement mechanism. The nucleophile active site attacks the C1' of nucleotide 34 to detach the guanine base from the RNA, forming a covalent enzyme-RNA intermediate. The proton acceptor active site deprotonates the incoming PreQ1, allowing a nucleophilic attack on the C1' of the ribose to form the product. After dissociation, two additional enzymatic reactions on the tRNA convert PreQ1 to queuine (Q), resulting in the hypermodified nucleoside queuosine (7-(((4,5-cis-dihydroxy-2-cyclopenten-1-yl)amino)methyl)-7-deazaguanosine). This chain is Queuine tRNA-ribosyltransferase, found in Salmonella choleraesuis (strain SC-B67).